Reading from the N-terminus, the 911-residue chain is Protein translocase subunit SecA (911 aa).

ATP is bound by residues Gln-87, Gly-105–Thr-109, and Asp-512. Residues Ala-865–Asn-892 form a disordered region. The segment covering Glu-873 to Val-883 has biased composition (low complexity). Residues Cys-895, Cys-897, Cys-906, and His-907 each coordinate Zn(2+).

The protein belongs to the SecA family. In terms of assembly, monomer and homodimer. Part of the essential Sec protein translocation apparatus which comprises SecA, SecYEG and auxiliary proteins SecDF-YajC and YidC. Zn(2+) is required as a cofactor.

Its subcellular location is the cell inner membrane. It localises to the cytoplasm. The enzyme catalyses ATP + H2O + cellular proteinSide 1 = ADP + phosphate + cellular proteinSide 2.. In terms of biological role, part of the Sec protein translocase complex. Interacts with the SecYEG preprotein conducting channel. Has a central role in coupling the hydrolysis of ATP to the transfer of proteins into and across the cell membrane, serving both as a receptor for the preprotein-SecB complex and as an ATP-driven molecular motor driving the stepwise translocation of polypeptide chains across the membrane. This Ectopseudomonas mendocina (strain ymp) (Pseudomonas mendocina) protein is Protein translocase subunit SecA.